We begin with the raw amino-acid sequence, 291 residues long: MKHLIRTDDFTTQEIESILADAELFSDGRFDRILRDKIIITLFFENSTRTRSSFEIAAKRLGAEIVHLDVANSSTKKGETLVDTAMNLDAMGPHAIIVRHQNSGVAKILSNHTKASIINAGDGAHAHPTQALLDLFTLKKHFKNLEGKKIAIVGDIKNSRVANSNIELLSRFKMEVILVAPPQFLPQSDLRTTHYLEDIIDEVDAIMSLRTQTERHSSQTYASLKDYASDFCITSEVVGDRDIIILHPGPVHRNIDICDALLADKRCKVLEQVANGVAIRMAVLKKLIYDV.

Residues arginine 49 and threonine 50 each coordinate carbamoyl phosphate. Lysine 77 contacts L-aspartate. Residues arginine 99, histidine 127, and glutamine 130 each contribute to the carbamoyl phosphate site. L-aspartate is bound by residues arginine 160 and arginine 210. Glycine 249 and proline 250 together coordinate carbamoyl phosphate.

This sequence belongs to the aspartate/ornithine carbamoyltransferase superfamily. ATCase family. As to quaternary structure, heterododecamer (2C3:3R2) of six catalytic PyrB chains organized as two trimers (C3), and six regulatory PyrI chains organized as three dimers (R2).

It carries out the reaction carbamoyl phosphate + L-aspartate = N-carbamoyl-L-aspartate + phosphate + H(+). The protein operates within pyrimidine metabolism; UMP biosynthesis via de novo pathway; (S)-dihydroorotate from bicarbonate: step 2/3. In terms of biological role, catalyzes the condensation of carbamoyl phosphate and aspartate to form carbamoyl aspartate and inorganic phosphate, the committed step in the de novo pyrimidine nucleotide biosynthesis pathway. In Sulfurimonas denitrificans (strain ATCC 33889 / DSM 1251) (Thiomicrospira denitrificans (strain ATCC 33889 / DSM 1251)), this protein is Aspartate carbamoyltransferase catalytic subunit.